The following is a 283-amino-acid chain: NADH-ubiquinone oxidoreductase 30.4 kDa subunit, mitochondrial (283 aa).

A mitochondrion-targeting transit peptide spans 1–17; it reads MASKLCRSRALASALRS. The segment at 258–283 is disordered; the sequence is GAGIDRKPESFKLPTPKPETKPEEKK.

The protein belongs to the complex I 30 kDa subunit family. In terms of assembly, complex I is composed of about 40 different subunits. This is a component of the iron-sulfur protein fraction.

It localises to the mitochondrion inner membrane. It carries out the reaction a ubiquinone + NADH + 5 H(+)(in) = a ubiquinol + NAD(+) + 4 H(+)(out). Its function is as follows. Core subunit of the mitochondrial membrane respiratory chain NADH dehydrogenase (Complex I) that is believed to belong to the minimal assembly required for catalysis. Complex I functions in the transfer of electrons from NADH to the respiratory chain. The immediate electron acceptor for the enzyme is believed to be ubiquinone. The polypeptide is NADH-ubiquinone oxidoreductase 30.4 kDa subunit, mitochondrial (nuo-31) (Neurospora crassa (strain ATCC 24698 / 74-OR23-1A / CBS 708.71 / DSM 1257 / FGSC 987)).